Reading from the N-terminus, the 103-residue chain is RNA-binding protein YlxQ (103 aa).

Belongs to the eukaryotic ribosomal protein eL8 family.

Functionally, RNA-binding protein that recognizes the K-turn motif present in ribosomal RNA, but also in box C/D and box C'/D' sRNAs. This Enterococcus faecium (Streptococcus faecium) protein is RNA-binding protein YlxQ.